The chain runs to 456 residues: 3-isopropylmalate dehydratase large subunit (456 aa).

3 residues coordinate [4Fe-4S] cluster: cysteine 336, cysteine 396, and cysteine 399.

The protein belongs to the aconitase/IPM isomerase family. LeuC type 1 subfamily. Heterodimer of LeuC and LeuD. [4Fe-4S] cluster is required as a cofactor.

It catalyses the reaction (2R,3S)-3-isopropylmalate = (2S)-2-isopropylmalate. It participates in amino-acid biosynthesis; L-leucine biosynthesis; L-leucine from 3-methyl-2-oxobutanoate: step 2/4. In terms of biological role, catalyzes the isomerization between 2-isopropylmalate and 3-isopropylmalate, via the formation of 2-isopropylmaleate. The chain is 3-isopropylmalate dehydratase large subunit from Staphylococcus epidermidis (strain ATCC 12228 / FDA PCI 1200).